A 353-amino-acid polypeptide reads, in one-letter code: MQEIDGSYGEGGGQLLRTSVALAAITGQSVRVYNIRAKRSNPGLAPQHLTAVKAVAALCRARTEGMEVKSQEIIFRPGPLRGGEYDFPIGTAGSVTLVLQAALPVALACGEKVRMNISGGTDVRAAPPLDYFRYVLLPLVYSMGARAKIEVLLRGYYPRGGGKVVVDVEPCLPLRPVLLNASEGLEGITGFVHISNLPKHIIHRMANGALAELSTFPTPAVGLEVFGKDDAIGEGGAVLLTAHKEHSRLGASAVAERGVPAERLGAEAGRCLREEILSGATLDIHAADQVLIYLALASGVSCFLTRELSSHAATTIWLLEQFLPVRFQVTQEAHLIRVRAKPEFNGMSSFLWR.

ATP contacts are provided by residues glutamine 100 and 285–289; that span reads HAADQ. Histidine 311 serves as the catalytic Tele-AMP-histidine intermediate.

Belongs to the RNA 3'-terminal cyclase family. Type 1 subfamily.

The protein resides in the cytoplasm. It catalyses the reaction a 3'-end 3'-phospho-ribonucleotide-RNA + ATP = a 3'-end 2',3'-cyclophospho-ribonucleotide-RNA + AMP + diphosphate. Its function is as follows. Catalyzes the conversion of 3'-phosphate to a 2',3'-cyclic phosphodiester at the end of RNA. The mechanism of action of the enzyme occurs in 3 steps: (A) adenylation of the enzyme by ATP; (B) transfer of adenylate to an RNA-N3'P to produce RNA-N3'PP5'A; (C) and attack of the adjacent 2'-hydroxyl on the 3'-phosphorus in the diester linkage to produce the cyclic end product. The biological role of this enzyme is unknown but it is likely to function in some aspects of cellular RNA processing. This is RNA 3'-terminal phosphate cyclase from Nitrosospira multiformis (strain ATCC 25196 / NCIMB 11849 / C 71).